Reading from the N-terminus, the 101-residue chain is UPF0060 membrane protein ACIAD1364 (101 aa).

The next 3 helical transmembrane spans lie at 24–44 (WLWLPAIISLAVFVWLLTLHP), 50–70 (IYAAYGGIYIFTALMWLRFID), and 79–99 (IWGGTVVLLGAALIILQPQGL).

This sequence belongs to the UPF0060 family.

The protein resides in the cell inner membrane. The sequence is that of UPF0060 membrane protein ACIAD1364 from Acinetobacter baylyi (strain ATCC 33305 / BD413 / ADP1).